Reading from the N-terminus, the 145-residue chain is D-aminoacyl-tRNA deacylase (145 aa).

The Gly-cisPro motif, important for rejection of L-amino acids motif lies at 137–138 (GP).

Belongs to the DTD family. As to quaternary structure, homodimer.

It is found in the cytoplasm. The enzyme catalyses glycyl-tRNA(Ala) + H2O = tRNA(Ala) + glycine + H(+). It catalyses the reaction a D-aminoacyl-tRNA + H2O = a tRNA + a D-alpha-amino acid + H(+). An aminoacyl-tRNA editing enzyme that deacylates mischarged D-aminoacyl-tRNAs. Also deacylates mischarged glycyl-tRNA(Ala), protecting cells against glycine mischarging by AlaRS. Acts via tRNA-based rather than protein-based catalysis; rejects L-amino acids rather than detecting D-amino acids in the active site. By recycling D-aminoacyl-tRNA to D-amino acids and free tRNA molecules, this enzyme counteracts the toxicity associated with the formation of D-aminoacyl-tRNA entities in vivo and helps enforce protein L-homochirality. This chain is D-aminoacyl-tRNA deacylase, found in Rhodococcus opacus (strain B4).